A 227-amino-acid polypeptide reads, in one-letter code: Probable 2-phosphosulfolactate phosphatase (227 aa).

It belongs to the ComB family. The cofactor is Mg(2+).

It catalyses the reaction (2R)-O-phospho-3-sulfolactate + H2O = (2R)-3-sulfolactate + phosphate. The chain is Probable 2-phosphosulfolactate phosphatase from Thermotoga petrophila (strain ATCC BAA-488 / DSM 13995 / JCM 10881 / RKU-1).